Here is a 137-residue protein sequence, read N- to C-terminus: Hemoglobin subunit beta (137 aa).

The Globin domain occupies 3–137 (HWTQEERDEI…VIDAISKQYH (135 aa)). Residues histidine 54 and histidine 83 each coordinate heme b.

This sequence belongs to the globin family. In terms of assembly, heterotetramer of two alpha chains and two beta chains. As to expression, red blood cells.

Functionally, involved in oxygen transport from gills to the various peripheral tissues. This is Hemoglobin subunit beta (HBB) from Mustelus griseus (Spotless smooth-hound).